The following is a 245-amino-acid chain: Lytic switch protein BZLF1 (245 aa).

Residues 1 to 167 form a transactivation region; it reads MMDPNSTSED…RTRKPQQPES (167 aa). Thr-14 and Thr-159 each carry phosphothreonine; by host. Positions 157–194 match the Bipartite nuclear localization signal motif; sequence RRTRKPQQPESLEECDSELEIKRYKNRVASRKCRAKFK. A phosphoserine; by host mark is found at Ser-167, Ser-173, and Ser-186. Residues 170-228 enclose the bZIP domain; the sequence is ECDSELEIKRYKNRVASRKCRAKFKQLLQHYREVAAAKSSENDRLRLLLKQMCPSLDVD. Residues 178 to 195 are basic motif; sequence KRYKNRVASRKCRAKFKQ. The interval 196-228 is leucine-zipper; that stretch reads LLQHYREVAAAKSSENDRLRLLLKQMCPSLDVD. Residues 229–245 form an accessory activation domain region; it reads SIIPRTPDVLHEDLLNF.

This sequence belongs to the bZIP family. Homodimer. Interacts (via b-ZIP domain) with the DNA polymerase processivity factor BMRF1 (via N-terminus); this interaction may inhibit BZLF1-induced transcription of the BMRF1 promoter. Interacts with human UBN1, CRTC2 and RACK1. Interacts (via N-terminus) with human PAX5 (via N-terminus); this interaction inhibits BZLF1-mediated lytic viral reactivation. Interacts (via leucine-zipper domain) with host CEBPA; this interaction induces G1 host cell cycle arrest. Interacts (via C-terminus) with host TP53BP1 (via C-terminus); this interaction is involved in the activation of the viral lytic cycle. Interacts with host chromatin-remodeling ATPase INO80; this interaction participates to the activation of early lytic viral genes by BZLF1. Interacts with host regulator of chromatin SMARCA5/hSNF2H; this interaction participates to the activation of early lytic viral genes by BZLF1. Interacts with host PLSCR1/Phospholipid scramblase 1; this interaction negatively regulates the transcriptional regulatory activity of BZLF1 by preventing the formation of the BZLF1-CBP complex.

It localises to the host nucleus. Its function is as follows. Transcription factor that acts as a molecular switch to induce the transition from the latent to the lytic or productive phase of the virus cycle. Mediates the switch from the latent to the lytic cycle of infection in cells containing a highly methylated viral genome. Probably binds to silenced chromatin and recruits host chromatin-remodeling enzymes. Regulates this switch by binding to 2 types of ZEBRA response elements (ZREs): the CpG-free AP-1 like elements (latency) and the methylated CpG-containing elements (lytic replication). Activates preferentially the methylated forms of the viral lytic R (BRLF1) and Na (BRRF1) gene promoters, the latters being the first genes activated during Z-mediated reactivation in latently infected cells. BZLF1 and BRLF1 act together to trigger lytic replication. Also binds the lytic origin of replication, oriLyt. Induces G1 cell cycle arrest by stabilizing the host CCAAT/enhancer binding protein CEBPA. This function is important because the lytic cycle preferentially takes place in host cells arrested in G1. The sequence is that of Lytic switch protein BZLF1 from Epstein-Barr virus (strain B95-8) (HHV-4).